The following is a 1597-amino-acid chain: Glucosyltransferase-I (1597 aa).

The first 38 residues, 1–38 (MEKNERFKMHKVKKRWVTISVASATMLASALGASVASA), serve as a signal peptide directing secretion. Residues 52-120 (LTADQTTTNQ…QTTTNANEAK (69 aa)) form a disordered region. Over residues 53-114 (TADQTTTNQD…STDTAAQTTT (62 aa)) the composition is skewed to low complexity. Cell wall-binding repeat units lie at residues 157–176 (MSNV…DGNV) and 178–197 (KNFA…TGAY). The interval 200–1050 (TSKVEADKSG…DQASNKYLNV (851 aa)) is catalytic; approximate. Cell wall-binding repeat units follow at residues 1089-1108 (TDSF…DGYM), 1109-1128 (VTGA…NGAA), 1130-1150 (RNTV…DGKR), 1152-1172 (ENGY…GVMA), 1173-1191 (LGLT…DGVQ), 1193-1214 (KDKI…NGNA), 1216-1236 (TNTF…DGVA), 1237-1256 (VTGA…NGQQ), 1258-1279 (KGDF…SGDM), 1281-1301 (TNTF…DGAA), 1302-1321 (VTGA…NGQQ), 1323-1343 (KGDI…QTGE), 1344-1365 (QVFN…DGTA), 1366-1380 (QTQA…KDGS), 1415-1434 (LTGA…NGHQ), 1436-1457 (KGQL…SGDQ), 1459-1478 (FNKS…DGTA), 1485-1505 (KGQT…EGQY), 1508-1527 (GSGW…DGKV), 1528-1547 (LTGL…NGIQ), 1549-1570 (KGKA…SGSM), and 1572-1591 (TNQW…DGAA). A glucan-binding; approximate region spans residues 1099–1597 (LYYFGQDGYM…DGAAVYRGWN (499 aa)).

Belongs to the glycosyl hydrolase 70 family.

It localises to the secreted. It carries out the reaction [(1-&gt;6)-alpha-D-glucosyl](n) + sucrose = [(1-&gt;6)-alpha-D-glucosyl](n+1) + D-fructose. Its function is as follows. Production of extracellular glucans, that are thought to play a key role in the development of the dental plaque because of their ability to adhere to smooth surfaces and mediate the aggregation of bacterial cells and food debris. This Streptococcus downei (Streptococcus sobrinus) protein is Glucosyltransferase-I (gtfI).